The chain runs to 111 residues: Complement inhibitor CirpT1 (111 aa).

The first 19 residues, 1 to 19, serve as a signal peptide directing secretion; it reads MATLIAARTKRKAPRVRIF. Disulfide bonds link Cys40–Cys64, Cys59–Cys98, Cys76–Cys99, and Cys85–Cys104.

The protein belongs to the CirpT family. As to expression, expressed in salivary glands.

It is found in the secreted. Functionally, complement inhibitor. Prevents complement-mediated activation of C5 by sterically preventing direct binding of C5 to its convertase (binding with domains MG4 and MG5). Binds C5 at a different binding site than the other tick complement inhibitors OmCI and RaCI3, and the drug eculizumab. Inhibits the complement in human, rat and guinea pig, and also shows a reduced inhibition in rabbit and pig. The protein is Complement inhibitor CirpT1 of Rhipicephalus pulchellus (Yellow backed tick).